We begin with the raw amino-acid sequence, 446 residues long: Forkhead box protein F2 (446 aa).

The segment covering 1–18 (MSTEGGPPPPPPRPPPAP) has biased composition (pro residues). The disordered stretch occupies residues 1–97 (MSTEGGPPPP…TKKATSGLRR (97 aa)). Over residues 45 to 78 (STSSSSSSSSASCASSSSNSVSASAGACKSAASS) the composition is skewed to low complexity. The segment at residues 100–194 (KPPYSYIALI…EEGSFRRRPR (95 aa)) is a DNA-binding region (fork-head). 3 disordered regions span residues 257–278 (AGAPGHAHPHHLHHHHVPHMSP), 304–325 (GGGGGDYGPDSSSSPVPSSPAM), and 340–371 (AHWSSPGASPYLKQPPALTPSSNPAASAGLHP). The segment covering 263–274 (AHPHHLHHHHVP) has biased composition (basic residues). Residues 311-325 (GPDSSSSPVPSSPAM) show a composition bias toward low complexity.

As to quaternary structure, interacts with the transcription factors TBP and TFIIB. In terms of tissue distribution, uniquely expressed in the bronchiolar epithelium and in type II pneumocytes.

Its subcellular location is the nucleus. Functionally, probable transcription activator for a number of lung-specific genes. Mediates up-regulation of the E3 ligase IRF2BPL and drives ubiquitination and degradation of CTNNB1. This chain is Forkhead box protein F2 (Foxf2), found in Mus musculus (Mouse).